Consider the following 413-residue polypeptide: Protein esc1 (413 aa).

A compositionally biased stretch (polar residues) spans 1–22; it reads MSSYALPSMQPTPTSSIPLRQM. 2 disordered regions span residues 1-202 and 230-265; these read MSSY…NQPS and MYVP…YSQG. Over residues 23-42 the composition is skewed to low complexity; the sequence is SQPTTSAPSNSASSTPYSPQ. Over residues 43-63 the composition is skewed to polar residues; it reads QVPLTHNSYPLSTPSSFQHGQ. Composition is skewed to low complexity over residues 86–103 and 116–126; these read SAAP…STAA and SSSSYVYSVPP. Residues 127-136 show a composition bias toward polar residues; sequence TNSTTSQASA. Low complexity predominate over residues 150–197; the sequence is STTLTPSTTDSSSTDVSSSDSVSTSASSSNASNTVSVTSPASSSATPL. The 52-residue stretch at 334–385 folds into the bHLH domain; sequence ELRTSHKLAERKRRKEIKELFDDLKDALPLDKSTKSSKWGLLTRAIQYIEQL.

Efficient DNA binding requires dimerization with another bHLH protein.

Its subcellular location is the nucleus. In terms of biological role, involved in the sexual differentiation process. Modulate the ability of the cell to differentiate in response to the nitrogen starvation signal; in particular in response to decreases in the level of cellular cAMP. The chain is Protein esc1 (esc1) from Schizosaccharomyces pombe (strain 972 / ATCC 24843) (Fission yeast).